A 316-amino-acid chain; its full sequence is Transaldolase (316 aa).

The active-site Schiff-base intermediate with substrate is Lys-131.

It belongs to the transaldolase family. Type 1 subfamily. In terms of assembly, homodimer.

Its subcellular location is the cytoplasm. The catalysed reaction is D-sedoheptulose 7-phosphate + D-glyceraldehyde 3-phosphate = D-erythrose 4-phosphate + beta-D-fructose 6-phosphate. It functions in the pathway carbohydrate degradation; pentose phosphate pathway; D-glyceraldehyde 3-phosphate and beta-D-fructose 6-phosphate from D-ribose 5-phosphate and D-xylulose 5-phosphate (non-oxidative stage): step 2/3. In terms of biological role, transaldolase is important for the balance of metabolites in the pentose-phosphate pathway. The chain is Transaldolase from Chromohalobacter salexigens (strain ATCC BAA-138 / DSM 3043 / CIP 106854 / NCIMB 13768 / 1H11).